The following is a 216-amino-acid chain: Pyridoxine/pyridoxamine 5'-phosphate oxidase (216 aa).

Substrate contacts are provided by residues 9 to 12 (RLSY) and Arg67. FMN contacts are provided by residues 62 to 67 (RIVLLR), 77 to 78 (YT), Lys84, and Gln106. Positions 124, 128, and 132 each coordinate substrate. FMN is bound by residues 142–143 (QS) and Trp188. 194–196 (RMH) contacts substrate. Arg198 provides a ligand contact to FMN.

It belongs to the pyridoxamine 5'-phosphate oxidase family. Homodimer. FMN serves as cofactor.

It catalyses the reaction pyridoxamine 5'-phosphate + O2 + H2O = pyridoxal 5'-phosphate + H2O2 + NH4(+). It carries out the reaction pyridoxine 5'-phosphate + O2 = pyridoxal 5'-phosphate + H2O2. Its pathway is cofactor metabolism; pyridoxal 5'-phosphate salvage; pyridoxal 5'-phosphate from pyridoxamine 5'-phosphate: step 1/1. It participates in cofactor metabolism; pyridoxal 5'-phosphate salvage; pyridoxal 5'-phosphate from pyridoxine 5'-phosphate: step 1/1. Functionally, catalyzes the oxidation of either pyridoxine 5'-phosphate (PNP) or pyridoxamine 5'-phosphate (PMP) into pyridoxal 5'-phosphate (PLP). The chain is Pyridoxine/pyridoxamine 5'-phosphate oxidase from Psychrobacter arcticus (strain DSM 17307 / VKM B-2377 / 273-4).